An 883-amino-acid polypeptide reads, in one-letter code: Valine--tRNA ligase (883 aa).

Residues 46–56 (PNVTGKLHLGH) carry the 'HIGH' region motif. Residues 520-524 (KMSKS) carry the 'KMSKS' region motif. Residue Lys523 participates in ATP binding. Residues 809 to 844 (LADLLNVEEELARLEKELAKWQKELDMVGKKLSNER) adopt a coiled-coil conformation.

The protein belongs to the class-I aminoacyl-tRNA synthetase family. ValS type 1 subfamily. In terms of assembly, monomer.

It localises to the cytoplasm. It carries out the reaction tRNA(Val) + L-valine + ATP = L-valyl-tRNA(Val) + AMP + diphosphate. In terms of biological role, catalyzes the attachment of valine to tRNA(Val). As ValRS can inadvertently accommodate and process structurally similar amino acids such as threonine, to avoid such errors, it has a 'posttransfer' editing activity that hydrolyzes mischarged Thr-tRNA(Val) in a tRNA-dependent manner. The chain is Valine--tRNA ligase from Streptococcus thermophilus (strain CNRZ 1066).